The following is a 252-amino-acid chain: LexA repressor (252 aa).

Residues 1–46 (MPEENRGGHQPYTEESSVSALHPVRTDDSVGSSAEQTGDAPTLTER) are disordered. The segment at residues 67–87 (IREIGEAVGLSSPSSVAHQLK) is a DNA-binding region (H-T-H motif). Catalysis depends on for autocatalytic cleavage activity residues Ser176 and Lys213.

The protein belongs to the peptidase S24 family. In terms of assembly, homodimer.

The enzyme catalyses Hydrolysis of Ala-|-Gly bond in repressor LexA.. In terms of biological role, represses a number of genes involved in the response to DNA damage (SOS response), including recA and lexA. In the presence of single-stranded DNA, RecA interacts with LexA causing an autocatalytic cleavage which disrupts the DNA-binding part of LexA, leading to derepression of the SOS regulon and eventually DNA repair. This chain is LexA repressor, found in Thermobifida fusca (strain YX).